Here is a 96-residue protein sequence, read N- to C-terminus: MNKYYDLVKAPIITELTNKLIERQNKYTFKVAKTANKVEIKKALESIFQVKVLSVNTRNVLPQFKRKGKFEGYTSGYKKAICKVAPGQKIEILANE.

The protein belongs to the universal ribosomal protein uL23 family. Part of the 50S ribosomal subunit. Contacts protein L29, and trigger factor when it is bound to the ribosome.

Functionally, one of the early assembly proteins it binds 23S rRNA. One of the proteins that surrounds the polypeptide exit tunnel on the outside of the ribosome. Forms the main docking site for trigger factor binding to the ribosome. The chain is Large ribosomal subunit protein uL23 from Onion yellows phytoplasma (strain OY-M).